A 500-amino-acid polypeptide reads, in one-letter code: NAD(P)H-quinone oxidoreductase chain 4, chloroplastic (500 aa).

Transmembrane regions (helical) follow at residues Phe-4–Leu-24, Tyr-35–Phe-55, Phe-87–Val-107, Leu-134–Met-154, Phe-167–Leu-187, Ala-208–Ile-228, His-242–Val-262, Ala-272–Ala-292, Ile-305–Asp-325, Gly-330–Gly-350, Met-364–Ala-384, Leu-386–Thr-406, Ile-416–Met-436, and Leu-462–Leu-482.

Belongs to the complex I subunit 4 family.

It is found in the plastid. Its subcellular location is the chloroplast thylakoid membrane. The catalysed reaction is a plastoquinone + NADH + (n+1) H(+)(in) = a plastoquinol + NAD(+) + n H(+)(out). It catalyses the reaction a plastoquinone + NADPH + (n+1) H(+)(in) = a plastoquinol + NADP(+) + n H(+)(out). This is NAD(P)H-quinone oxidoreductase chain 4, chloroplastic from Pelargonium hortorum (Common geranium).